The sequence spans 1493 residues: Pleckstrin homology domain-containing family H member 2 (1493 aa).

Positions L20 to S175 form a coiled coil. 4 disordered regions span residues S202–E230, N245–I335, L363–P439, and S613–E705. The span at K208–E230 shows a compositional bias: basic and acidic residues. Composition is skewed to polar residues over residues N245–E260 and T267–A281. The span at L374–K388 shows a compositional bias: basic and acidic residues. 3 stretches are compositionally biased toward polar residues: residues K389 to P409, N421 to P432, and S676 to N698. PH domains lie at P703–R797 and K811–G919. The MyTH4 domain occupies H955–L1110. In terms of domain architecture, FERM spans F1121–K1451. A disordered region spans residues M1474–L1493.

In terms of assembly, self-associates. Interacts with TGFB1I1. Kidney. Reduced expression in patients with focal segmental glomerulosclerosis.

The protein localises to the cytoplasm. It is found in the cytoskeleton. It localises to the cell membrane. The protein resides in the cell projection. Its subcellular location is the lamellipodium. In the kidney glomerulus may play a role in linking podocyte foot processes to the glomerular basement membrane. May be involved in stabilization of F-actin by attenuating its depolymerization. Can recruit TGFB1I1 from focal adhesions to podocyte lamellipodia. This Homo sapiens (Human) protein is Pleckstrin homology domain-containing family H member 2 (PLEKHH2).